A 2276-amino-acid chain; its full sequence is Protein Ycf2 (2276 aa).

Residue 1621–1628 participates in ATP binding; the sequence is GSIGTGRS.

This sequence belongs to the Ycf2 family.

It localises to the plastid. The protein resides in the chloroplast stroma. Probable ATPase of unknown function. Its presence in a non-photosynthetic plant (Epifagus virginiana) and experiments in tobacco indicate that it has an essential function which is probably not related to photosynthesis. The polypeptide is Protein Ycf2 (Guizotia abyssinica (Niger)).